The sequence spans 520 residues: MSQDIHGEKILILDFGSQYTQLIARRVREAHVYCELHPFDMDLDAIRAFGPKGIILSGGPKSVYEEGAPVVEEALFELGIPVLGICYGMQLMSRHFGGRVVPAGKREYGHATLLPCGSPGPLFDEFFVDGKSPVWMSHGDHVEQVPDGFEVVGCSENAPVCAIQDIARDLYGVQFHPEVNHTPRGEQLLDTFVRQICGCTGQWTPGQIIEDAVVRIREQVGSERVILGLSGGVDSSVAAALIQRAIGDQLVCVFVDNGLLRLDEGDQVMRTFAQNMGVNVIRVNAQDRFMTALAGESDPERKRKIIGNLFVEIFEEESANIEDATWLAQGTIYPDVIESAGAKTGKAHNIKSHHNVGGLPEHMKLKLLEPLRELFKDEVRAIGEELGLPHPMVYRHPFPGPGLGVRILGEVKPEYADILRRADAIYIEELYRTGHYDKISQAFAVFLPVKSVGVMGDGRTYEYVIALRAVETKDFMTAGWYPLPYADMAHISGRIINEVKGVNRVVYDISSKPPATIEWE.

One can recognise a Glutamine amidotransferase type-1 domain in the interval 9–202 (KILILDFGSQ…VRQICGCTGQ (194 aa)). Catalysis depends on Cys-86, which acts as the Nucleophile. Active-site residues include His-176 and Glu-178. Positions 203-395 (WTPGQIIEDA…LGLPHPMVYR (193 aa)) constitute a GMPS ATP-PPase domain. 230–236 (SGGVDSS) serves as a coordination point for ATP.

Homodimer.

It catalyses the reaction XMP + L-glutamine + ATP + H2O = GMP + L-glutamate + AMP + diphosphate + 2 H(+). Its pathway is purine metabolism; GMP biosynthesis; GMP from XMP (L-Gln route): step 1/1. Catalyzes the synthesis of GMP from XMP. This Syntrophotalea carbinolica (strain DSM 2380 / NBRC 103641 / GraBd1) (Pelobacter carbinolicus) protein is GMP synthase [glutamine-hydrolyzing].